Reading from the N-terminus, the 796-residue chain is Probable coatomer subunit beta' (796 aa).

WD repeat units lie at residues 4-42 (LDFQ…GIWN), 46-84 (QTLV…RVYN), 88-126 (GEKV…KCFN), 131-170 (WKCV…KVWS), 172-214 (GSSV…KVWD), and 218-256 (KACV…KIWH).

This sequence belongs to the WD repeat COPB2 family. As to quaternary structure, oligomeric complex that consists of at least the alpha, beta, beta', gamma, delta, epsilon and zeta subunits.

The protein localises to the cytoplasm. The protein resides in the golgi apparatus membrane. It localises to the cytoplasmic vesicle. Its subcellular location is the COPI-coated vesicle membrane. Its function is as follows. The coatomer is a cytosolic protein complex that binds to dilysine motifs and reversibly associates with Golgi non-clathrin-coated vesicles, which further mediate biosynthetic protein transport from the ER, via the Golgi up to the trans Golgi network. Coatomer complex is required for budding from Golgi membranes, and is essential for the retrograde Golgi-to-ER transport of dilysine-tagged proteins. The protein is Probable coatomer subunit beta' (sec27) of Schizosaccharomyces pombe (strain 972 / ATCC 24843) (Fission yeast).